A 360-amino-acid polypeptide reads, in one-letter code: Peptide chain release factor 1 (360 aa).

Residue Q235 is modified to N5-methylglutamine. A disordered region spans residues 284–313 (AKRQQAEASTRRNLLGSGDRSDRNRTYNFP).

Belongs to the prokaryotic/mitochondrial release factor family. Post-translationally, methylated by PrmC. Methylation increases the termination efficiency of RF1.

The protein resides in the cytoplasm. Peptide chain release factor 1 directs the termination of translation in response to the peptide chain termination codons UAG and UAA. This chain is Peptide chain release factor 1, found in Salmonella agona (strain SL483).